The following is a 233-amino-acid chain: 2-amino-5-formylamino-6-ribosylaminopyrimidin-4(3H)-one 5'-monophosphate deformylase (233 aa).

Fe cation contacts are provided by Glu-33, His-35, Asp-44, and His-114.

The protein belongs to the creatininase superfamily. FAPy deformylase family. In terms of assembly, homodimer. The cofactor is Fe(2+). It depends on Zn(2+) as a cofactor.

The enzyme catalyses 2-amino-5-formylamino-6-(5-phospho-D-ribosylamino)pyrimidin-4(3H)-one + H2O = 2,5-diamino-6-(1-D-ribosylamino)pyrimidin-4(3H)-one 5'-phosphate + formate + H(+). Its pathway is cofactor biosynthesis; coenzyme F420 biosynthesis. It participates in cofactor biosynthesis; riboflavin biosynthesis. In terms of biological role, catalyzes the hydrolysis of the formamide of 2-amino-5-formylamino-6-ribosylamino-4(3H)-pyrimidinone 5'-monophosphate (FAPy) to form 2,5-diamino-6-ribosylamino-4(3H)-pyrimidinone 5'-phosphate (APy). The polypeptide is 2-amino-5-formylamino-6-ribosylaminopyrimidin-4(3H)-one 5'-monophosphate deformylase (Methanosphaera stadtmanae (strain ATCC 43021 / DSM 3091 / JCM 11832 / MCB-3)).